The sequence spans 62 residues: DNA-binding protein 7 (62 aa).

It belongs to the 7 kDa DNA-binding/endoribonuclease P2 family. Monomer.

The protein localises to the cytoplasm. Functionally, can constrain negative DNA supercoils. May be involved in maintaining the integrity of the genome at high temperature. The sequence is that of DNA-binding protein 7 from Metallosphaera cuprina (strain Ar-4).